A 483-amino-acid chain; its full sequence is Siroheme synthase (483 aa).

The tract at residues 1–203 (MNYFPIFANL…RQNTLAEREL (203 aa)) is precorrin-2 dehydrogenase /sirohydrochlorin ferrochelatase. NAD(+) is bound by residues 22-23 (AV) and 43-44 (KH). Position 128 is a phosphoserine (serine 128). The uroporphyrinogen-III C-methyltransferase stretch occupies residues 214 to 483 (GFVSLVGAGP…LGTGQEQQAA (270 aa)). An S-adenosyl-L-methionine-binding site is contributed by proline 223. Aspartate 246 functions as the Proton acceptor in the catalytic mechanism. The active-site Proton donor is the lysine 268. Residues 299–301 (GGD), valine 304, 329–330 (TA), methionine 381, and glycine 410 each bind S-adenosyl-L-methionine.

In the N-terminal section; belongs to the precorrin-2 dehydrogenase / sirohydrochlorin ferrochelatase family. It in the C-terminal section; belongs to the precorrin methyltransferase family.

It catalyses the reaction uroporphyrinogen III + 2 S-adenosyl-L-methionine = precorrin-2 + 2 S-adenosyl-L-homocysteine + H(+). The catalysed reaction is precorrin-2 + NAD(+) = sirohydrochlorin + NADH + 2 H(+). It carries out the reaction siroheme + 2 H(+) = sirohydrochlorin + Fe(2+). It functions in the pathway cofactor biosynthesis; adenosylcobalamin biosynthesis; precorrin-2 from uroporphyrinogen III: step 1/1. Its pathway is cofactor biosynthesis; adenosylcobalamin biosynthesis; sirohydrochlorin from precorrin-2: step 1/1. It participates in porphyrin-containing compound metabolism; siroheme biosynthesis; precorrin-2 from uroporphyrinogen III: step 1/1. The protein operates within porphyrin-containing compound metabolism; siroheme biosynthesis; siroheme from sirohydrochlorin: step 1/1. It functions in the pathway porphyrin-containing compound metabolism; siroheme biosynthesis; sirohydrochlorin from precorrin-2: step 1/1. In terms of biological role, multifunctional enzyme that catalyzes the SAM-dependent methylations of uroporphyrinogen III at position C-2 and C-7 to form precorrin-2 via precorrin-1. Then it catalyzes the NAD-dependent ring dehydrogenation of precorrin-2 to yield sirohydrochlorin. Finally, it catalyzes the ferrochelation of sirohydrochlorin to yield siroheme. In Neisseria meningitidis serogroup C / serotype 2a (strain ATCC 700532 / DSM 15464 / FAM18), this protein is Siroheme synthase.